The primary structure comprises 463 residues: tRNA-2-methylthio-N(6)-dimethylallyladenosine synthase (463 aa).

An MTTase N-terminal domain is found at 18-136 (RKLYIETYGC…LPNLVGAAEQ (119 aa)). [4Fe-4S] cluster contacts are provided by cysteine 27, cysteine 63, cysteine 100, cysteine 174, cysteine 178, and cysteine 181. The 233-residue stretch at 160–392 (GGVHINGFVS…IALQNRLSEE (233 aa)) folds into the Radical SAM core domain. Positions 395-458 (KRDIGKTFEV…SATLFGEVVE (64 aa)) constitute a TRAM domain.

Belongs to the methylthiotransferase family. MiaB subfamily. In terms of assembly, monomer. It depends on [4Fe-4S] cluster as a cofactor.

Its subcellular location is the cytoplasm. It catalyses the reaction N(6)-dimethylallyladenosine(37) in tRNA + (sulfur carrier)-SH + AH2 + 2 S-adenosyl-L-methionine = 2-methylsulfanyl-N(6)-dimethylallyladenosine(37) in tRNA + (sulfur carrier)-H + 5'-deoxyadenosine + L-methionine + A + S-adenosyl-L-homocysteine + 2 H(+). Catalyzes the methylthiolation of N6-(dimethylallyl)adenosine (i(6)A), leading to the formation of 2-methylthio-N6-(dimethylallyl)adenosine (ms(2)i(6)A) at position 37 in tRNAs that read codons beginning with uridine. This chain is tRNA-2-methylthio-N(6)-dimethylallyladenosine synthase, found in Porphyromonas gingivalis (strain ATCC BAA-308 / W83).